The sequence spans 292 residues: NAD kinase (292 aa).

The Proton acceptor role is filled by Asp-73. NAD(+) is bound by residues Asp-73–Gly-74, Asn-147–Glu-148, His-158, Arg-175, Asp-177, Thr-188–Ser-193, and Gln-247.

This sequence belongs to the NAD kinase family. Requires a divalent metal cation as cofactor.

The protein localises to the cytoplasm. The enzyme catalyses NAD(+) + ATP = ADP + NADP(+) + H(+). Its function is as follows. Involved in the regulation of the intracellular balance of NAD and NADP, and is a key enzyme in the biosynthesis of NADP. Catalyzes specifically the phosphorylation on 2'-hydroxyl of the adenosine moiety of NAD to yield NADP. This chain is NAD kinase, found in Shigella boydii serotype 18 (strain CDC 3083-94 / BS512).